A 204-amino-acid chain; its full sequence is Inactive ribonuclease-like protein 9 (204 aa).

The N-terminal stretch at 1–26 (MMRTLITTHPLLLLLLLQQLLQPVQF) is a signal peptide. 3 disulfide bridges follow: Cys-97-Cys-152, Cys-115-Cys-167, and Cys-122-Cys-129. Residues Asn-130 and Asn-142 are each glycosylated (N-linked (GlcNAc...) asparagine).

Belongs to the pancreatic ribonuclease family.

The protein resides in the secreted. Functionally, does not exhibit any ribonuclease activity. In Papio anubis (Olive baboon), this protein is Inactive ribonuclease-like protein 9 (RNASE9).